A 172-amino-acid polypeptide reads, in one-letter code: Translationally-controlled tumor protein (172 aa).

The 172-residue stretch at 1–172 (MIIYRDLISH…FKDGLEMEKC (172 aa)) folds into the TCTP domain. Phosphoserine is present on residues S46 and S53. S64 carries the phosphoserine; by PLK1 modification. The interval 70 to 172 (VDIVMNHHLQ…FKDGLEMEKC (103 aa)) is required for reduction of TSC22D1 protein stability.

Belongs to the TCTP family. In terms of assembly, homodimer. Interacts with STEAP3. Interacts with TSC22D1; interaction results in the destabilization of TSC22D1 protein.

It is found in the cytoplasm. Involved in calcium binding and microtubule stabilization. Acts as a negative regulator of TSC22D1-mediated apoptosis, via interaction with and destabilization of TSC22D1 protein. The sequence is that of Translationally-controlled tumor protein (Tpt1) from Mus musculus (Mouse).